Here is a 359-residue protein sequence, read N- to C-terminus: Tropomodulin-1 (359 aa).

The interval 36–61 (ELDPDNALLPAGLRQKDQTTKAPTGP) is disordered. Residues 39 to 138 (PDNALLPAGL…CDIAAILGMH (100 aa)) are tropomyosin-binding.

This sequence belongs to the tropomodulin family. As to quaternary structure, binds to the N-terminus of tropomyosin and to actin. Interacts with FLII.

The protein localises to the cytoplasm. It localises to the cytoskeleton. Its function is as follows. Blocks the elongation and depolymerization of the actin filaments at the pointed end. The Tmod/TM complex contributes to the formation of the short actin protofilament, which in turn defines the geometry of the membrane skeleton. In Rattus norvegicus (Rat), this protein is Tropomodulin-1 (Tmod1).